The following is a 327-amino-acid chain: Cyclic AMP-responsive element-binding protein 1 (327 aa).

Disordered regions lie at residues Met1–Ala29 and Ser94–Ile113. Positions Asp8–Thr146 constitute a KID domain. Over residues Ala20–Ala29 the composition is skewed to polar residues. Ser119 is modified (phosphoserine; by CaMK1, CaMK2, CaMK4, PKB/AKT1 or PKB/AKT2, RPS6KA3, RPS6KA4, RPS6KA5 and SGK1). Residue Lys122 forms a Glycyl lysine isopeptide (Lys-Gly) (interchain with G-Cter in SUMO2) linkage. The tract at residues Asp126 to Pro149 is disordered. Ser128 carries the phosphoserine; by CaMK2 modification. Residue Ser257 is modified to Phosphoserine; by HIPK2. The region spanning Ala269–Asp327 is the bZIP domain. The interval Arg270–Lys295 is basic motif. Glycyl lysine isopeptide (Lys-Gly) (interchain with G-Cter in SUMO1) cross-links involve residues Lys271 and Lys290. Residues Leu297–Leu318 are leucine-zipper.

Belongs to the bZIP family. Interacts with PPRC1. Binds DNA as a dimer. This dimer is stabilized by magnesium ions. Interacts, through the bZIP domain, with the coactivators CRTC1/TORC1, CRTC2/TORC2 and CRTC3/TORC3. When phosphorylated on Ser-119, binds CREBBP. Interacts with CREBL2; regulates CREB1 phosphorylation, stability and transcriptional activity. Interacts (phosphorylated form) with TOX3. Interacts with ARRB1. Binds to HIPK2. Interacts with SGK1. Interacts with TSSK4; this interaction facilitates phosphorylation on Ser-119. Forms a complex with KMT2A and CREBBP. Interacts with TOX4; CREB1 is required for full induction of TOX4-dependent activity and the interaction is increased by cAMP and inhibited by insulin. Phosphorylation of Ser-119 allows CREBBP binding. Stimulated by phosphorylation. Phosphorylation of both Ser-128 and Ser-119 in the SCN regulates the activity of CREB and participate in circadian rhythm generation. Phosphorylated upon calcium influx by CaMK4 and CaMK2 on Ser-119. CaMK4 is much more potent than CaMK2 in activating CREB. Phosphorylated by CaMK2 on Ser-128. Phosphorylation of Ser-128 blocks CREB-mediated transcription even when Ser-119 is phosphorylated. Phosphorylated by CaMK1. Phosphorylation of Ser-257 by HIPK2 in response to genotoxic stress promotes CREB1 activity, facilitating the recruitment of the coactivator CBP. Phosphorylated at Ser-119 by RPS6KA3, RPS6KA4 and RPS6KA5 in response to mitogenic or stress stimuli. CREBL2 positively regulates phosphorylation at Ser-119 thereby stimulating CREB1 transcriptional activity. In liver, phosphorylation is induced by fasting or glucagon in a circadian fashion. Phosphorylated by TSSK4 on Ser-119. Post-translationally, sumoylated with SUMO1. Sumoylation on Lys-290, but not on Lys-271, is required for nuclear localization of this protein. Sumoylation is enhanced under hypoxia, promoting nuclear localization and stabilization.

It localises to the nucleus. Functionally, phosphorylation-dependent transcription factor that stimulates transcription upon binding to the DNA cAMP response element (CRE), a sequence present in many viral and cellular promoters. Transcription activation is enhanced by the TORC coactivators which act independently of Ser-119 phosphorylation. Involved in different cellular processes including the synchronization of circadian rhythmicity and the differentiation of adipose cells. Regulates the expression of apoptotic and inflammatory response factors in cardiomyocytes in response to ERFE-mediated activation of AKT signaling. The polypeptide is Cyclic AMP-responsive element-binding protein 1 (Creb1) (Rattus norvegicus (Rat)).